The primary structure comprises 246 residues: PF03932 family protein CutC (246 aa).

The protein belongs to the CutC family.

The protein localises to the cytoplasm. In Treponema denticola (strain ATCC 35405 / DSM 14222 / CIP 103919 / JCM 8153 / KCTC 15104), this protein is PF03932 family protein CutC.